A 429-amino-acid polypeptide reads, in one-letter code: Histidine--tRNA ligase (429 aa).

This sequence belongs to the class-II aminoacyl-tRNA synthetase family. As to quaternary structure, homodimer.

It is found in the cytoplasm. It catalyses the reaction tRNA(His) + L-histidine + ATP = L-histidyl-tRNA(His) + AMP + diphosphate + H(+). The polypeptide is Histidine--tRNA ligase (Pseudomonas syringae pv. syringae (strain B728a)).